Here is a 111-residue protein sequence, read N- to C-terminus: Putative gamma-glutamylcyclotransferase BH1612 (111 aa).

14-17 (YGHL) contributes to the substrate binding site. The active-site Proton acceptor is the E55.

The protein belongs to the gamma-glutamylcyclotransferase family.

In terms of biological role, putative gamma-glutamylcyclotransferase. The sequence is that of Putative gamma-glutamylcyclotransferase BH1612 from Halalkalibacterium halodurans (strain ATCC BAA-125 / DSM 18197 / FERM 7344 / JCM 9153 / C-125) (Bacillus halodurans).